We begin with the raw amino-acid sequence, 1144 residues long: ATP-dependent helicase/deoxyribonuclease subunit B (1144 aa).

The UvrD-like helicase ATP-binding domain maps to 1–276 (MAIRYVFGRA…IDLDRNERPV (276 aa)). 8-15 (GRAGRGKS) is an ATP binding site. The UvrD-like helicase C-terminal domain maps to 274 to 584 (RPVLPKVQEI…LVGSIERSKS (311 aa)). Positions 784, 1102, 1105, and 1111 each coordinate [4Fe-4S] cluster.

It belongs to the helicase family. AddB/RexB type 1 subfamily. In terms of assembly, heterodimer of AddA and AddB. Mg(2+) is required as a cofactor. It depends on [4Fe-4S] cluster as a cofactor.

Functionally, the heterodimer acts as both an ATP-dependent DNA helicase and an ATP-dependent, dual-direction single-stranded exonuclease. Recognizes the chi site generating a DNA molecule suitable for the initiation of homologous recombination. The AddB subunit has 5' -&gt; 3' nuclease activity but not helicase activity. This Alkaliphilus oremlandii (strain OhILAs) (Clostridium oremlandii (strain OhILAs)) protein is ATP-dependent helicase/deoxyribonuclease subunit B.